The chain runs to 251 residues: Coenzyme F420:L-glutamate ligase (251 aa).

GTP-binding positions include 9–12, 38–39, and lysine 43; these read LPEI and ST. Aspartate 113 provides a ligand contact to a divalent metal cation. Asparagine 116 contacts GTP. Positions 149, 150, and 207 each coordinate a divalent metal cation. A GTP-binding site is contributed by 205–212; the sequence is AGEGDGGT.

This sequence belongs to the CofE family. As to quaternary structure, homodimer. It depends on Mg(2+) as a cofactor. Mn(2+) is required as a cofactor. Requires K(+) as cofactor.

It carries out the reaction oxidized coenzyme F420-0 + GTP + L-glutamate = oxidized coenzyme F420-1 + GDP + phosphate + H(+). The enzyme catalyses oxidized coenzyme F420-1 + GTP + L-glutamate = oxidized coenzyme F420-2 + GDP + phosphate + H(+). It functions in the pathway cofactor biosynthesis; coenzyme F420 biosynthesis. Catalyzes the GTP-dependent successive addition of two or more gamma-linked L-glutamates to the L-lactyl phosphodiester of 7,8-didemethyl-8-hydroxy-5-deazariboflavin (F420-0) to form coenzyme F420-0-glutamyl-glutamate (F420-2) or polyglutamated F420 derivatives. The sequence is that of Coenzyme F420:L-glutamate ligase from Halorubrum lacusprofundi (strain ATCC 49239 / DSM 5036 / JCM 8891 / ACAM 34).